The following is a 247-amino-acid chain: MTPRYRRVVLKASGEALMGKQGFGIDVSVVDQIAADIADALSLGVEVGVVIGGGNIFRGVAVASKGGDRVTGDHMGMLATVINSLALRTSLAKIGVEAVVLSAIAMPELCESFSQRQALAYMDAGKVVIFAGGTGNPFFTTDSAAALRAAEIGADALFKGTQVDGVYSADPRKDANAVRYDHITHDQVIRDGLAIMDTAAIALARENNIPIIVFSIHEAGGFGAILRGGGHCTIVDDDPAAQQQASA.

11–14 (KASG) is an ATP binding site. An involved in allosteric activation by GTP region spans residues 19–24 (GKQGFG). A UMP-binding site is contributed by Gly-53. ATP-binding residues include Gly-54 and Arg-58. UMP is bound by residues Asp-73 and 134-141 (TGNPFFTT). Residues Thr-161, Gln-162, Tyr-167, and Asp-170 each contribute to the ATP site.

This sequence belongs to the UMP kinase family. As to quaternary structure, homohexamer.

The protein resides in the cytoplasm. The catalysed reaction is UMP + ATP = UDP + ADP. Its pathway is pyrimidine metabolism; CTP biosynthesis via de novo pathway; UDP from UMP (UMPK route): step 1/1. Its activity is regulated as follows. Allosterically activated by GTP. Inhibited by UTP. In terms of biological role, catalyzes the reversible phosphorylation of UMP to UDP. The chain is Uridylate kinase from Chelativorans sp. (strain BNC1).